Consider the following 116-residue polypeptide: Dynein light chain Tctex-type 3 (116 aa).

The residue at position 4 (Y4) is a 3'-nitrotyrosine.

Belongs to the dynein light chain Tctex-type family. In terms of assembly, homodimer. The cytoplasmic dynein 1 complex consists of two catalytic heavy chains (HCs) and a number of non-catalytic subunits presented by intermediate chains (ICs), light intermediate chains (LICs) and light chains (LCs); the composition seems to vary in respect to the IC, LIC and LC composition. The heavy chain homodimer serves as a scaffold for the probable homodimeric assembly of the respective non-catalytic subunits. The ICs and LICs bind directly to the HC dimer and the LCs assemble on the IC dimer. DYNLT1 and DYNLT3 compete for association with dynein IC (DYNC1I1 or DYNC1I2). Self-associates. Interacts with DYNC1I1 and DYNC1I2. Interacts with BUB3. Interacts with SATB1 in nucleus to form complex with matrix attachment regions (MARs) of DNA.

Its subcellular location is the nucleus. The protein resides in the cytoplasm. The protein localises to the cytoskeleton. It is found in the chromosome. It localises to the centromere. Its subcellular location is the kinetochore. Functionally, acts as one of several non-catalytic accessory components of the cytoplasmic dynein 1 complex that are thought to be involved in linking dynein to cargos and to adapter proteins that regulate dynein function. Cytoplasmic dynein 1 acts as a motor for the intracellular retrograde motility of vesicles and organelles along microtubules. Probably binds BUB3 as part of transport cargo. Required for the efficient progression through mitosis. This is Dynein light chain Tctex-type 3 (DYNLT3) from Ovis aries (Sheep).